The chain runs to 213 residues: General transcription factor 3C polypeptide 6 (213 aa).

The segment covering 1–11 (MAAAADERSPE) has biased composition (basic and acidic residues). 2 disordered regions span residues 1–20 (MAAA…EEEE) and 191–213 (SGPL…QMLP). An N-acetylalanine modification is found at Ala-2. Phosphoserine is present on Ser-9.

The protein belongs to the TFIIIC subunit 6 family. As to quaternary structure, part of the TFIIIC subcomplex TFIIIC2, consisting of six subunits, GTF3C1, GTF3C2, GTF3C3, GTF3C4, GTF3C5 and GTF3C6. Interacts with GTF3C4 and GTF3C5.

The protein localises to the nucleus. Its function is as follows. Involved in RNA polymerase III-mediated transcription. Integral, tightly associated component of the DNA-binding TFIIIC2 subcomplex that directly binds tRNA and virus-associated RNA promoters. The chain is General transcription factor 3C polypeptide 6 (GTF3C6) from Homo sapiens (Human).